The primary structure comprises 352 residues: Sulfate-binding protein (352 aa).

Positions 1–40 (MARSAFGWGFSVIAVLMVGSITACNTTTTTEPGQGENASQ) are cleaved as a signal peptide.

The protein belongs to the prokaryotic sulfate-binding protein family.

The protein resides in the periplasm. Its function is as follows. This protein specifically binds sulfate and is involved in its transmembrane transport. In Synechocystis sp. (strain ATCC 27184 / PCC 6803 / Kazusa), this protein is Sulfate-binding protein (sbpA).